A 594-amino-acid polypeptide reads, in one-letter code: DNA ligase (594 aa).

Glutamate 256 contacts ATP. Catalysis depends on lysine 258, which acts as the N6-AMP-lysine intermediate. Residues arginine 263, arginine 279, glutamate 309, phenylalanine 349, arginine 426, and lysine 432 each coordinate ATP.

Belongs to the ATP-dependent DNA ligase family. The cofactor is Mg(2+).

It catalyses the reaction ATP + (deoxyribonucleotide)n-3'-hydroxyl + 5'-phospho-(deoxyribonucleotide)m = (deoxyribonucleotide)n+m + AMP + diphosphate.. In terms of biological role, DNA ligase that seals nicks in double-stranded DNA during DNA replication, DNA recombination and DNA repair. The polypeptide is DNA ligase (Ignicoccus hospitalis (strain KIN4/I / DSM 18386 / JCM 14125)).